The chain runs to 822 residues: Calpain-3 (822 aa).

A disordered region spans residues 1–36 (MPTVISASVAPRTGAEPMSPGPIAQAAQDKGTEAGG). The Calpain catalytic domain maps to 74–418 (LFVDPEFPPD…FTKLEICNLT (345 aa)). Active-site residues include Cys-129, His-335, and Asn-359. Residues 419–587 (ADALESDKLQ…KRNLSEEVEN (169 aa)) form a domain III region. Residues 588–650 (TISVDRPVKK…EPGNTDQESE (63 aa)) form a linker region. The interval 604-652 (IFVSDRANSNKELGVDQETEEGKDNTSPDKQAKSPQLEPGNTDQESEEQ) is disordered. A compositionally biased stretch (basic and acidic residues) spans 623–635 (EEGKDNTSPDKQA). EF-hand domains follow at residues 650–684 (EEQRQFRNIFRQIAGDDMEICADELKNVLNRVVNK), 693–726 (FTLESCRSMIALMDTDGSGRLNLQEFHHLWKKIK), 723–758 (KKIKTWQKIFKHYDTDQSGTINSYEMRNAVKDAGFH), and 788–822 (VRLEGMFRAFNAFDKDGDGIIKLNVLEWLQLTMYA). The interval 651-822 (EQRQFRNIFR…LEWLQLTMYA (172 aa)) is domain IV. Ca(2+) is bound by residues Ala-663, Asp-666, Glu-668, Glu-673, Asp-706, Asp-708, Ser-710, Arg-712, Glu-717, Asp-736, Asp-738, Ser-740, Thr-742, Glu-747, Asp-801, Asp-803, Asp-805, and Ile-807.

The protein belongs to the peptidase C2 family. As to quaternary structure, homodimer; via EF-hand domain 4. Interacts with TTN/titin. Interacts with CMYA5; this interaction, which results in CMYA5 proteolysis, may protect CAPN3 from autolysis. Interacts with SIMC1. Interacts with UTP25; the interaction is required for CAPN3 translocation to the nucleolus. In terms of tissue distribution, skeletal muscle.

The protein resides in the cytoplasm. It is found in the nucleus. Its subcellular location is the nucleolus. The enzyme catalyses Broad endopeptidase activity.. With respect to regulation, activated by micromolar concentrations of calcium and inhibited by calpastatin. In terms of biological role, calcium-regulated non-lysosomal thiol-protease. Proteolytically cleaves CTBP1. Mediates, with UTP25, the proteasome-independent degradation of p53/TP53. The polypeptide is Calpain-3 (CAPN3) (Bos taurus (Bovine)).